We begin with the raw amino-acid sequence, 2038 residues long: Fer-1-like protein 5 (2038 aa).

7 consecutive C2 domains span residues 1–100 (MLRV…MFVR), 145–265 (TQKK…TLLR), 307–424 (QNTR…QGMY), 1055–1186 (TPED…FTPL), 1225–1345 (IPCK…SLNY), 1467–1587 (PKPP…ARCG), and 1705–1853 (GPPG…KQCS). Ca(2+) contacts are provided by D1502, D1508, D1557, F1558, D1559, D1565, D1824, S1827, and D1830. Residues 1961–1981 (IICLVVTLVIGFILLNFVYSA) traverse the membrane as a helical segment.

The protein belongs to the ferlin family. In terms of assembly, interacts (via second C2 domain) with EHD1 and EHD2. The cofactor is Ca(2+). In terms of tissue distribution, expressed in differentiating myoblasts and myotubes.

It is found in the cell membrane. It localises to the membrane. Its function is as follows. Plays a role in myoblast fusion; probable mediator of endocytic recycling for membrane trafficking events during myotube formation. This Mus musculus (Mouse) protein is Fer-1-like protein 5 (Fer1l5).